A 562-amino-acid chain; its full sequence is Protein FAM222B (562 aa).

Composition is skewed to low complexity over residues 147 to 167 (PQAQALARQQALQHAQTLAHA) and 183 to 201 (ALSHPQSLQQPQGLGHPQQ). 2 disordered regions span residues 147-242 (PQAQ…PPNV) and 537-562 (AHRAPGTRAPDPTDSRSLHIQHPGYR).

This sequence belongs to the FAM222 family.

This chain is Protein FAM222B (Fam222b), found in Mus musculus (Mouse).